The following is a 601-amino-acid chain: MKHWIQENYKNRSWAGELNESQEGKQIVLFGWSFRFRDQGGVIFIDLRDRTGIIQVVARKELLGDSFTLAEKVRSEYVLAVRGTLKKRDLESINPRMQTGTIEVVLDQLEILNVAKTPPFSLDEFDEVSEELKLKYRYLDFRREELKNRMIKRHEFIFAIRNYLNKRKFVEIETPILNKSTPEGARDFLVPSRLNPNQFYALPQSPQIFKQILMVGGMERYFQIVKCFRDEDLRADRQPEFTQLDMEFSFVSQEEILSEIEGLVETIYKEVFNIQLSIPFPRMTYNTAMEEYGSDKPDLRFGMKLVDVSEIVKDCDFNVFAGAVKNGGTVKVVCVPGGSIISRKEIEDYTAWLNRDYKAKGLAYMKHGTEGLESTITKRFKKEELEAISKACGSKEGDMLFFGADEREIVNHSLGALRLKLSERFETPKENEINITWIVDFPMFEWNKDHKRWDALHHPFTSPSDESIPFFESMETLQKNAGNATAKAYDLVMNGVEIGGGSIRIHSREIQNKVFQILGINEEEAKEKFGFLLEALEFGAPPHGGLAFGIDRMLMLLTGGKSIRDVIAFPKTQKGLCLMSECPSPVEEKQLQELKIKLAKV.

E183 serves as a coordination point for L-aspartate. The segment at 207–210 (QIFK) is aspartate. Residue R229 coordinates L-aspartate. Residues 229–231 (RDE) and Q238 each bind ATP. An L-aspartate-binding site is contributed by H457. E497 is an ATP binding site. R504 serves as a coordination point for L-aspartate. Position 549-552 (549-552 (GIDR)) interacts with ATP.

Belongs to the class-II aminoacyl-tRNA synthetase family. Type 1 subfamily. Homodimer.

It localises to the cytoplasm. The enzyme catalyses tRNA(Asp) + L-aspartate + ATP = L-aspartyl-tRNA(Asp) + AMP + diphosphate. In terms of biological role, catalyzes the attachment of L-aspartate to tRNA(Asp) in a two-step reaction: L-aspartate is first activated by ATP to form Asp-AMP and then transferred to the acceptor end of tRNA(Asp). This Leptospira interrogans serogroup Icterohaemorrhagiae serovar Lai (strain 56601) protein is Aspartate--tRNA ligase.